We begin with the raw amino-acid sequence, 96 residues long: Large ribosomal subunit protein uL23 (96 aa).

It belongs to the universal ribosomal protein uL23 family. In terms of assembly, part of the 50S ribosomal subunit. Contacts protein L29, and trigger factor when it is bound to the ribosome.

One of the early assembly proteins it binds 23S rRNA. One of the proteins that surrounds the polypeptide exit tunnel on the outside of the ribosome. Forms the main docking site for trigger factor binding to the ribosome. This chain is Large ribosomal subunit protein uL23, found in Vesicomyosocius okutanii subsp. Calyptogena okutanii (strain HA).